The sequence spans 166 residues: MSVNEQKAPELQEKLVQVNRVAKVVKGGRIFAFTALTVVGDGKGRVGFGRGKAREVPVAIQKAMEAARKNMVDVALDGTTLQYPVRAQHGGSKVFMQPASEGTGIIAGGAMRAVLEVAGVQNVLSKCYGSTNPVNVVRSTIKGLQAMKAPEDVAAKRGKSVEDILG.

An S5 DRBM domain is found at 11–74 (LQEKLVQVNR…EAARKNMVDV (64 aa)).

It belongs to the universal ribosomal protein uS5 family. Part of the 30S ribosomal subunit. Contacts proteins S4 and S8.

Functionally, with S4 and S12 plays an important role in translational accuracy. Its function is as follows. Located at the back of the 30S subunit body where it stabilizes the conformation of the head with respect to the body. The sequence is that of Small ribosomal subunit protein uS5 from Marinobacter nauticus (strain ATCC 700491 / DSM 11845 / VT8) (Marinobacter aquaeolei).